Reading from the N-terminus, the 521-residue chain is Cytochrome P450 monooxygenase 105 (521 aa).

A helical transmembrane segment spans residues 12–32 (GVASPATLAVAAVTFLTALVL). N-linked (GlcNAc...) asparagine glycosylation is found at Asn-218, Asn-274, and Asn-317. Residue Cys-449 coordinates heme.

This sequence belongs to the cytochrome P450 family. Requires heme as cofactor.

It localises to the membrane. It functions in the pathway secondary metabolite biosynthesis. Cytochrome P450 monooxygenase that is able to use anthracene, carbazole, pyrene, phenanthrene and trans-stilbene as substrates for oxidation. These multifunctional properties against a series of polycyclic aromatic hydrocarbons (PAHs) suggest that CYP105 would play important roles, at least in part, in fungal metabolic systems involved in xenobiotic detoxification. The chain is Cytochrome P450 monooxygenase 105 from Postia placenta (strain ATCC 44394 / Madison 698-R) (Brown rot fungus).